A 736-amino-acid chain; its full sequence is ATP-dependent zinc metalloprotease FtsH (736 aa).

2 disordered regions span residues 1-39 (MDSN…GQQR) and 57-83 (QQTQ…RKKM). Topologically, residues 1–87 (MDSNVDSQRV…ADRKKMPPGK (87 aa)) are cytoplasmic. A compositionally biased stretch (polar residues) spans 57–73 (QQTQNRTGFASADTKQG). The chain crosses the membrane as a helical span at residues 88–108 (AWLWFVLILIVNFLMVRLLIP). Over 109–205 (DAEQPVMVPY…KPIHEERSPW (97 aa)) the chain is Periplasmic. The helical transmembrane segment at 206-226 (ATIVYSFGPGLLFIAFYIWLF) threads the bilayer. Over 227–736 (RRMAQQGGLG…VSLPGVAGPS (510 aa)) the chain is Cytoplasmic. ATP is bound at residue 301–308 (GAPGTGKT). Residue H522 coordinates Zn(2+). E523 is an active-site residue. Residues H526 and D598 each contribute to the Zn(2+) site. The tract at residues 706 to 736 (PALDAGKLPVPDGGDKNAEPSVSLPGVAGPS) is disordered.

This sequence in the central section; belongs to the AAA ATPase family. In the C-terminal section; belongs to the peptidase M41 family. In terms of assembly, homohexamer. Zn(2+) is required as a cofactor.

The protein localises to the cell inner membrane. Acts as a processive, ATP-dependent zinc metallopeptidase for both cytoplasmic and membrane proteins. Plays a role in the quality control of integral membrane proteins. This chain is ATP-dependent zinc metalloprotease FtsH, found in Syntrophus aciditrophicus (strain SB).